Here is a 459-residue protein sequence, read N- to C-terminus: Transcriptional coactivator YAP1 (459 aa).

4 positions are modified to phosphoserine; by LATS1 and LATS2: Ser21, Ser69, Ser87, and Ser119. 2 disordered regions span residues 51 to 88 and 103 to 129; these read LPDS…AHSS and SGMA…VPLP. WW domains are found at residues 126-159 and 186-219; these read VPLP…DPRK and GPLP…DPRL. Disordered stretches follow at residues 231–254 and 307–364; these read TQSA…MGGN and PTSM…SSYS. The interval 247 to 459 is transactivation domain; the sequence is HGGVMGGNNQ…IDKESFLTWL (213 aa). Polar residues-rich tracts occupy residues 307 to 347 and 355 to 364; these read PTSM…SGTY and DSGLSMSSYS.

This sequence belongs to the YAP1 family. In terms of processing, phosphorylated by lats1 and lats2; leading to cytoplasmic translocation and inactivation. As to expression, ubiquitously expressed throughout development.

It is found in the cytoplasm. It localises to the nucleus. Its subcellular location is the cell junction. The protein resides in the tight junction. The protein localises to the cell membrane. Its function is as follows. Transcriptional regulator which can act both as a coactivator and a corepressor and is the critical downstream regulatory target in the Hippo signaling pathway that plays a pivotal role in organ size control and tumor suppression by restricting proliferation and promoting apoptosis. Plays a key role in tissue tension and 3D tissue shape by regulating cortical actomyosin network formation. This is Transcriptional coactivator YAP1 from Oryzias latipes (Japanese rice fish).